A 227-amino-acid chain; its full sequence is Peroxisomal membrane protein 11B (227 aa).

At 1–85 (MSLDTVDKLV…RNPGATPMIR (85 aa)) the chain is on the cytoplasmic side. The chain crosses the membrane as a helical span at residues 86–106 (FLAVLANSGEMVYFFFDHFLW). The Lumenal segment spans residues 107-201 (LSRIGSIDAK…IALAEIHPNP (95 aa)). The helical transmembrane segment at 202–222 (FCNHTITLGISGLVSAWAGWY) threads the bilayer. Residues 223 to 227 (RNWPS) lie on the Cytoplasmic side of the membrane.

This sequence belongs to the peroxin-11 family. Homooligomer. Interacts with ARC5 and FIS1B on peroxisomes. Expressed in roots, leaves and developing siliques.

It is found in the peroxisome membrane. Its function is as follows. Involved in peroxisomal proliferation. Promotes peroxisomal duplication, aggregation or elongation without fission. The chain is Peroxisomal membrane protein 11B (PEX11B) from Arabidopsis thaliana (Mouse-ear cress).